A 214-amino-acid chain; its full sequence is Large ribosomal subunit protein bL25 (214 aa).

A disordered region spans residues 193 to 214 (PRAAAEEEDTGAEGDVEAADAE). A compositionally biased stretch (acidic residues) spans 198–214 (EEEDTGAEGDVEAADAE).

It belongs to the bacterial ribosomal protein bL25 family. CTC subfamily. Part of the 50S ribosomal subunit; part of the 5S rRNA/L5/L18/L25 subcomplex. Contacts the 5S rRNA. Binds to the 5S rRNA independently of L5 and L18.

Its function is as follows. This is one of the proteins that binds to the 5S RNA in the ribosome where it forms part of the central protuberance. In Nitrosococcus oceani (strain ATCC 19707 / BCRC 17464 / JCM 30415 / NCIMB 11848 / C-107), this protein is Large ribosomal subunit protein bL25.